Reading from the N-terminus, the 446-residue chain is Argininosuccinate synthase (446 aa).

Residues 17-25 and Ala-43 each bind ATP; that span reads AFSGGLDTS. Tyr-99 lines the L-citrulline pocket. ATP contacts are provided by Gly-129 and Thr-131. L-aspartate contacts are provided by Thr-131, Asn-135, and Asp-136. Asn-135 serves as a coordination point for L-citrulline. Asp-136 contributes to the ATP binding site. Residues Arg-139 and Ser-192 each coordinate L-citrulline. Asp-194 contributes to the ATP binding site. Positions 201, 203, and 280 each coordinate L-citrulline.

It belongs to the argininosuccinate synthase family. Type 2 subfamily. Homotetramer.

Its subcellular location is the cytoplasm. The enzyme catalyses L-citrulline + L-aspartate + ATP = 2-(N(omega)-L-arginino)succinate + AMP + diphosphate + H(+). Its pathway is amino-acid biosynthesis; L-arginine biosynthesis; L-arginine from L-ornithine and carbamoyl phosphate: step 2/3. This Variovorax paradoxus (strain S110) protein is Argininosuccinate synthase.